Reading from the N-terminus, the 637-residue chain is Palmitoyltransferase Hip14 (637 aa).

At 1–295 the chain is on the cytoplasmic side; it reads MYQSACQAAT…SKLRHDKRLR (295 aa). ANK repeat units lie at residues 77 to 106, 111 to 140, 144 to 173, 177 to 207, and 212 to 242; these read ETVT…TVDA, LNAT…DPRI, EGCS…DPDL, GGMT…NPAM, and HGNT…SLDV. A helical transmembrane segment spans residues 296–315; sequence WWSMVACPFTAFYLAGIVFT. Residues 316-318 lie on the Lumenal side of the membrane; sequence VNT. Residues 319-341 form a helical membrane-spanning segment; the sequence is LYIIKFFLLGCLYSIFHTIGKAL. The Cytoplasmic portion of the chain corresponds to 342–345; sequence FDEH. The helical transmembrane segment at 346–366 threads the bilayer; the sequence is LMALLPLSVYLATKAWFYVTW. At 367–373 the chain is on the lumenal side; it reads LMYIDDA. Residues 374–394 traverse the membrane as a helical segment; it reads VSFTATVCFLISSLLLWVCFL. The Cytoplasmic portion of the chain corresponds to 395-472; that stretch reads KSWKGDPGII…VGNCIGLKNH (78 aa). In terms of domain architecture, DHHC spans 430–480; it reads SFCSGCLVRRPIRSKHCSVCDRCVARFDHHCPWVGNCIGLKNHSYFMGFLW. Cysteine 460 (S-palmitoyl cysteine intermediate) is an active-site residue. The chain crosses the membrane as a helical span at residues 473 to 493; the sequence is SYFMGFLWMLLIMCAWMLYGG. Residues 494 to 520 lie on the Lumenal side of the membrane; it reads SKYYVNQCNVRFDDFLGAMRAIGNCDA. A helical membrane pass occupies residues 521–541; the sequence is WVGWVMGNALLHMSWVILLTI. Over 542-637 the chain is Cytoplasmic; the sequence is CQTYQVICLG…DGMAGDHQYV (96 aa).

It belongs to the DHHC palmitoyltransferase family. AKR/ZDHHC17 subfamily. As to quaternary structure, interacts with dorsal-ventral patterning protein Sog. As to expression, in stage 13-15 embryos, expressed in the central nervous system. At the third instar larval stage, expressed in the ventral nerve cord and is enriched in the neuropil.

It localises to the golgi apparatus membrane. The protein localises to the presynaptic cell membrane. It carries out the reaction L-cysteinyl-[protein] + hexadecanoyl-CoA = S-hexadecanoyl-L-cysteinyl-[protein] + CoA. In terms of biological role, probable palmitoyltransferase which is required for photoreceptor synaptic transmission and for the correct expression and localization of palmitoylated protein Csp and synaptosomal-associated protein Snap25. Probably palmitoylates Csp. Probably also palmitoylates the dorsal-ventral patterning protein Sog and promotes its secretion and activity and the stabilization of the membrane-bound form. Required for synaptic vesicle exocytosis. In Drosophila melanogaster (Fruit fly), this protein is Palmitoyltransferase Hip14.